The following is a 314-amino-acid chain: Acetyl-coenzyme A carboxylase carboxyl transferase subunit beta (314 aa).

A CoA carboxyltransferase N-terminal domain is found at 25–294; the sequence is VWTKCDSCSQ…PGTKPIVAEF (270 aa). Residues C29, C32, C48, and C51 each coordinate Zn(2+). The segment at 29-51 adopts a C4-type zinc-finger fold; that stretch reads CDSCSQVLYRAELERNLEVCPKC.

Belongs to the AccD/PCCB family. Acetyl-CoA carboxylase is a heterohexamer composed of biotin carboxyl carrier protein (AccB), biotin carboxylase (AccC) and two subunits each of ACCase subunit alpha (AccA) and ACCase subunit beta (AccD). Requires Zn(2+) as cofactor.

The protein localises to the cytoplasm. The catalysed reaction is N(6)-carboxybiotinyl-L-lysyl-[protein] + acetyl-CoA = N(6)-biotinyl-L-lysyl-[protein] + malonyl-CoA. Its pathway is lipid metabolism; malonyl-CoA biosynthesis; malonyl-CoA from acetyl-CoA: step 1/1. Its function is as follows. Component of the acetyl coenzyme A carboxylase (ACC) complex. Biotin carboxylase (BC) catalyzes the carboxylation of biotin on its carrier protein (BCCP) and then the CO(2) group is transferred by the transcarboxylase to acetyl-CoA to form malonyl-CoA. This chain is Acetyl-coenzyme A carboxylase carboxyl transferase subunit beta, found in Photorhabdus laumondii subsp. laumondii (strain DSM 15139 / CIP 105565 / TT01) (Photorhabdus luminescens subsp. laumondii).